The following is a 1544-amino-acid chain: Transcriptional activator GLI3 (1544 aa).

Composition is skewed to polar residues over residues methionine 1–threonine 10 and asparagine 402–glycine 429. Disordered regions lie at residues methionine 1 to alanine 83 and serine 373 to glutamate 477. Over residues valine 463–proline 476 the composition is skewed to basic and acidic residues. The C2H2-type 1 zinc-finger motif lies at threonine 482–histidine 509. A C2H2-type 2; degenerate zinc finger spans residues leucine 520 to histidine 542. C2H2-type zinc fingers lie at residues histidine 548–histidine 572, tyrosine 578–histidine 603, and tyrosine 609–histidine 634. 4 disordered regions span residues aspartate 622–asparagine 728, arginine 865–serine 919, serine 1126–serine 1155, and histidine 1327–serine 1368. The span at histidine 634–proline 650 shows a compositional bias: basic and acidic residues. Positions serine 660–threonine 685 are enriched in polar residues. The span at serine 686 to lysine 701 shows a compositional bias: basic and acidic residues. Residues proline 702 to asparagine 728 are compositionally biased toward polar residues. Positions arginine 865–serine 882 are enriched in low complexity. A compositionally biased stretch (polar residues) spans glycine 1330–glutamine 1355.

Belongs to the GLI C2H2-type zinc-finger protein family. In terms of processing, phosphorylation is essential for its proteolytic processing. The repressor form (GLI3R), a C-terminally truncated form is generated from the full-length GLI3 protein (GLI3FL) through proteolytic processing.

It localises to the nucleus. The protein localises to the cytoplasm. Has a dual function as a transcriptional activator and a repressor of the sonic hedgehog (Shh) pathway, and plays a role in limb development. The full-length GLI3 form (GLI3FL) acts as an activator (GLI3A) while GLI3R, its C-terminally truncated form, acts as a repressor. The chain is Transcriptional activator GLI3 (GLI3) from Gallus gallus (Chicken).